The chain runs to 672 residues: Transcriptional activator of sulfur metabolism MET4 (672 aa).

Residues 1 to 10 (MKQEQSHEGD) are compositionally biased toward basic and acidic residues. The tract at residues 1-44 (MKQEQSHEGDSYSTEFINLFGKDTATHPSSNNGANNNGMGSTNS) is disordered. Residues 29-44 (SSNNGANNNGMGSTNS) show a composition bias toward low complexity. Short sequence motifs (9aaTAD) lie at residues 89 to 97 (ILLEQLAYV), 102 to 110 (PSLDNEFSN), and 109 to 117 (SNVDWNVNT). Residues 95–144 (AYVDNFIPSLDNEFSNVDWNVNTTHNNANNNGADTFSSINANPFDLDEQL) are transcriptional activation. Disordered regions lie at residues 157-265 (IFPD…NMTS) and 299-347 (TTHT…NITV). The segment covering 165–174 (SNNNNNSNNG) has biased composition (low complexity). The span at 175-188 (NDDHSNHDVLHEDP) shows a compositional bias: basic and acidic residues. The inhibitory region; AdoMet responsiveness; required for interaction with MET30 stretch occupies residues 188–235 (PSTNNRQRNPHFLTQRRNTFLTSQYDQSKSRFSSKNKRNGNNGETNNF). Positions 202–214 (QRRNTFLTSQYDQ) are enriched in polar residues. Residues 226–238 (NGNNGETNNFGDN) show a composition bias toward low complexity. 2 stretches are compositionally biased toward polar residues: residues 251-265 (GSPS…NMTS) and 301-321 (HTPN…SSSQ). Positions 312–375 (VTSAQNSSSQ…NVPNGAYNSL (64 aa)) are auxiliary; required for high transcriptional activity under nonrepressive growth conditions. Positions 375-403 (LISAGFDNDQIDAIAAIMAYHHQKKIREN) are required for interaction with MET31 and MET32. S416 bears the Phosphoserine mark. Residues 475–574 (PKSNNIHNQR…DNEDDEYDDA (100 aa)) form a disordered region. Over residues 477-486 (SNNIHNQRQP) the composition is skewed to polar residues. The segment covering 487-498 (SRNDHKISRESD) has biased composition (basic and acidic residues). Low complexity predominate over residues 499–512 (GNNGNDNVHHNNAV). Composition is skewed to basic and acidic residues over residues 519–528 (RGDEIAKIRS) and 537–565 (SDHK…KYSD). Phosphoserine is present on S564. The region spanning 586–649 (KKELGDDDED…KLLKNLVLSS (64 aa)) is the bZIP domain. The segment at 601–612 (KKSHQKKKLKEK) is basic motif. The stretch at 609 to 648 (LKEKELESSIHELTEIAASLQKRIHTLETENKLLKNLVLS) forms a coiled coil. The leucine-zipper stretch occupies residues 614 to 642 (LESSIHELTEIAASLQKRIHTLETENKLL).

The protein belongs to the bZIP family. In terms of assembly, interacts with MET30. Tethered to DNA through two alternate complexes associating MET4 with MET28 and either MET31 or MET32. Interacts with MET28 and CBF1 through its leucine zipper to form a heteromeric complex.

Its subcellular location is the nucleus. Functionally, positive trans-acting factor capable of stimulating the transcription of the MET genes from the methionine biosynthetic pathway. MET4, MET28 and CBF1 are required for full induction of MET25 and MET16 gene transcription. MET4 controls as well the derepression of MET6. Required for the transcription of genes necessary for sulfur amino acid biosynthesis. Involved in the transcription activation of MET28 and MET30. Required for MET3 gene expression via assembly of the MET4-MET28-MET31 and MET4-MET28-MET32 complexes. Involved in response to cadmium and arsenic. Cadmium-activated MET4 also induces glutathione biosynthesis. This chain is Transcriptional activator of sulfur metabolism MET4 (MET4), found in Saccharomyces cerevisiae (strain ATCC 204508 / S288c) (Baker's yeast).